A 171-amino-acid polypeptide reads, in one-letter code: Flavodoxin (171 aa).

Residues 4–165 (IGIFFGSDTG…RIKQWVKQII (162 aa)) enclose the Flavodoxin-like domain.

This sequence belongs to the flavodoxin family. The cofactor is FMN.

In terms of biological role, low-potential electron donor to a number of redox enzymes. The chain is Flavodoxin (fldA) from Buchnera aphidicola subsp. Acyrthosiphon pisum (strain APS) (Acyrthosiphon pisum symbiotic bacterium).